Here is a 532-residue protein sequence, read N- to C-terminus: Eukaryotic translation initiation factor 3 subunit D (532 aa).

Residues 108-161 form a disordered region; sequence ATVLKTRGGAPRGGSFAGRGGSQRGGRFQNQPGRGPVGGQRGPNPRFGKSKFGW. Residues 117-131 are compositionally biased toward gly residues; that stretch reads APRGGSFAGRGGSQR. The segment covering 132–141 has biased composition (low complexity); that stretch reads GGRFQNQPGR. Positions 296-310 are RNA gate; sequence PLDFITVDENAADPP.

This sequence belongs to the eIF-3 subunit D family. In terms of assembly, component of the eukaryotic translation initiation factor 3 (eIF-3) complex.

The protein localises to the cytoplasm. In terms of biological role, mRNA cap-binding component of the eukaryotic translation initiation factor 3 (eIF-3) complex, which is involved in protein synthesis of a specialized repertoire of mRNAs and, together with other initiation factors, stimulates binding of mRNA and methionyl-tRNAi to the 40S ribosome. The eIF-3 complex specifically targets and initiates translation of a subset of mRNAs involved in cell proliferation. In the eIF-3 complex, eif3d specifically recognizes and binds the 7-methylguanosine cap of a subset of mRNAs. This chain is Eukaryotic translation initiation factor 3 subunit D, found in Yarrowia lipolytica (strain CLIB 122 / E 150) (Yeast).